We begin with the raw amino-acid sequence, 143 residues long: Large ribosomal subunit protein uL11 (143 aa).

This sequence belongs to the universal ribosomal protein uL11 family. Part of the ribosomal stalk of the 50S ribosomal subunit. Interacts with L10 and the large rRNA to form the base of the stalk. L10 forms an elongated spine to which L12 dimers bind in a sequential fashion forming a multimeric L10(L12)X complex. One or more lysine residues are methylated.

Forms part of the ribosomal stalk which helps the ribosome interact with GTP-bound translation factors. The protein is Large ribosomal subunit protein uL11 of Ralstonia nicotianae (strain ATCC BAA-1114 / GMI1000) (Ralstonia solanacearum).